A 658-amino-acid polypeptide reads, in one-letter code: tRNA uridine 5-carboxymethylaminomethyl modification enzyme MnmG (658 aa).

Residue 13–18 (GAGHAG) coordinates FAD. Residue 285 to 299 (GPRYCPSVEDKINRF) coordinates NAD(+).

This sequence belongs to the MnmG family. In terms of assembly, homodimer. Heterotetramer of two MnmE and two MnmG subunits. Requires FAD as cofactor.

The protein localises to the cytoplasm. Its function is as follows. NAD-binding protein involved in the addition of a carboxymethylaminomethyl (cmnm) group at the wobble position (U34) of certain tRNAs, forming tRNA-cmnm(5)s(2)U34. In Verminephrobacter eiseniae (strain EF01-2), this protein is tRNA uridine 5-carboxymethylaminomethyl modification enzyme MnmG.